The sequence spans 290 residues: MASLKELKDRIGSVKSTQKITKAKQMVAAAKLRRAQANAEAARPYAERLADVMASLAGKVSGDSAPRLLAGSGNDQKHLLVVVNTDKGLCGGLNSNIVKEAKAQAKKLIAAGKDVQFYLVGKKGRAPIKRDYEKQIAKHFDTSTVKQPGFEEADAIANELIDMFEAGEFDVAHLVYPTFKSALVQDPTTNQLIPVPSPEGEGTGGDAVVEYEPGEEEILEELLPRYVKTQLFGALLEREASEQGASMTAMDNATRNAGDLINKLTIQYNRSRQAAITTELIEIIAGAEAL.

Belongs to the ATPase gamma chain family. As to quaternary structure, F-type ATPases have 2 components, CF(1) - the catalytic core - and CF(0) - the membrane proton channel. CF(1) has five subunits: alpha(3), beta(3), gamma(1), delta(1), epsilon(1). CF(0) has three main subunits: a, b and c.

The protein resides in the cell inner membrane. Functionally, produces ATP from ADP in the presence of a proton gradient across the membrane. The gamma chain is believed to be important in regulating ATPase activity and the flow of protons through the CF(0) complex. In Erythrobacter litoralis (strain HTCC2594), this protein is ATP synthase gamma chain.